We begin with the raw amino-acid sequence, 506 residues long: CDK5 regulatory subunit-associated protein 3 (506 aa).

3 consecutive short sequence motifs (shuffled ATG8-binding motif) follow at residues 267–270 (IDWG), 292–295 (IDWG), and 310–313 (IDWG). The tract at residues 269 to 506 (WGDFGVEAVS…RPVNLMGTSL (238 aa)) is required for interaction with UFL1 and mediates interaction with CHEK1. Positions 355–370 (DELMELEIFLAQRAVE) are RPL10a-binding domain (RBD). Residue K450 forms a Glycyl lysine isopeptide (Lys-Gly) (interchain with G-Cter in SUMO2) linkage.

This sequence belongs to the CDK5RAP3 family. Substrate adapter component of the UFM1 ribosome E3 ligase (UREL) complex, composed of UFL1, DDRGK1 and CDK5RAP3. Interaction with UFL1 anchors CDK5RAP3 in the cytoplasm, preventing its translocation to the nucleus which allows expression of the CCND1 cyclin and progression of cells through the G1/S transition. Interacts with ATG8 family proteins MAP1LC3A, MAP1LC3B, GABARAP, GABARAPL1 and GABARAPL2. Interacts with CDK5R1; competes with CDK5RAP1 and CDK5RAP2. Interacts with RELA. Interacts with CHEK1; may negatively regulate CHEK1 and thereby stimulate entry into mitosis. Interacts with CDKN2A/ARF and MDM2; forms a ternary complex involved in regulation of p53/TP53. Interacts with MAPK14. Interacts with CCNB1. Interacts with TUBG1; may regulate CDK5RAP3 in mitotic G2/M transition checkpoint. In terms of assembly, (Microbial infection) Interacts with hepatitis B virus large envelope protein mutant pre-s2; promotes mitotic entry. May be phosphorylated by CDK5. In terms of processing, ubiquitinated. Probably triggers proteasomal degradation and is negatively regulated by UFL1. Post-translationally, may be ufmylated. Cleaved by caspases early during apoptosis, the resulting peptides may play a role in rupture of the nuclear envelope. Ubiquitously expressed. Expressed in heart, brain, placenta, lung, liver, skeletal muscle, kidney and pancreas. Isoform 3 is expressed in kidney, liver, skeletal muscle and placenta.

The protein resides in the endoplasmic reticulum membrane. The protein localises to the cytoplasm. Its subcellular location is the nucleus. It is found in the cytoskeleton. It localises to the microtubule organizing center. The protein resides in the centrosome. Substrate adapter of E3 ligase complexes mediating ufmylation, the covalent attachment of the ubiquitin-like modifier UFM1 to substrate proteins, and which is involved in various processes, such as ribosome recycling and reticulophagy (also called ER-phagy). As part of the UREL complex, plays a key role in ribosome recycling by promoting mono-ufmylation of RPL26/uL24 subunit of the 60S ribosome. Ufmylation of RPL26/uL24 occurs on free 60S ribosomes following ribosome dissociation: it weakens the junction between post-termination 60S subunits and SEC61 translocons, promoting release and recycling of the large ribosomal subunit from the endoplasmic reticulum membrane. Ufmylation of RPL26/uL24 and subsequent 60S ribosome recycling either take place after normal termination of translation or after ribosome stalling during cotranslational translocation at the endoplasmic reticulum. Within the UREL complex, CDK5RAP3 acts as a substrate adapter that constrains UFL1 ligase activity to mono-ufmylate RPL26/uL24 at 'Lys-134'. The UREL complex is also involved in reticulophagy in response to endoplasmic reticulum stress by promoting ufmylation of proteins such as CYB5R3, thereby promoting lysosomal degradation of ufmylated proteins. Also acts as a regulator of transcription: negatively regulates NF-kappa-B-mediated gene transcription through the control of RELA phosphorylation. Also regulates mitotic G2/M transition checkpoint and mitotic G2 DNA damage checkpoint. Through its interaction with CDKN2A/ARF and MDM2 may induce MDM2-dependent p53/TP53 ubiquitination, stabilization and activation in the nucleus, thereby promoting G1 cell cycle arrest and inhibition of cell proliferation. May also play a role in the rupture of the nuclear envelope during apoptosis. May regulate MAPK14 activity by regulating its dephosphorylation by PPM1D/WIP1. Required for liver development. Functionally, (Microbial infection) May be negatively regulated by hepatitis B virus large envelope protein mutant pre-s2 to promote mitotic entry. This Homo sapiens (Human) protein is CDK5 regulatory subunit-associated protein 3.